The primary structure comprises 162 residues: Novel acetylcholine receptor chaperone (162 aa).

At 1 to 5 the chain is on the cytoplasmic side; the sequence is MASPR. Residues 6 to 26 form a helical membrane-spanning segment; that stretch reads TVTIVALSVTLGLFFVFMGTI. Residues 27–61 lie on the Lumenal side of the membrane; the sequence is KLTPRLSKDAYSEMKRAYKSYVKALPALKKIGISS. A helical transmembrane segment spans residues 62–82; it reads VFLRKAIGSLELACGIVLTLV. The Cytoplasmic portion of the chain corresponds to 83-88; it reads PGRPKD. The chain crosses the membrane as a helical span at residues 89 to 109; that stretch reads VANFILLLLVLIVLFFHQLVG. The Lumenal portion of the chain corresponds to 110–114; it reads DPLKR. Residues 115–131 form a helical membrane-spanning segment; sequence YAHALVFGILLTCRLLV. Residues 132–162 are Cytoplasmic-facing; that stretch reads SRQPEEEFPEKKLSRGNNGAHSREPIKMKVS. Residues 141 to 162 are disordered; the sequence is EKKLSRGNNGAHSREPIKMKVS. Positions 152–162 are enriched in basic and acidic residues; that stretch reads HSREPIKMKVS.

The protein belongs to the DoxX family.

It is found in the peroxisome membrane. The protein resides in the cytoplasmic vesicle. Its subcellular location is the endoplasmic reticulum membrane. Functionally, molecular chaperone which mediates the proper assembly and functional expression of the nicotinic acetylcholine receptors (nAChRs) throughout the brain. Essential for the proper folding, assembly, function and surface trafficking of alpha-7 (CHRNA7), alpha-4-beta-2, alpha-3-beta-2 and alpha-3-beta-4 receptors. This chain is Novel acetylcholine receptor chaperone (tmem35a), found in Xenopus tropicalis (Western clawed frog).